The primary structure comprises 115 residues: Ribosomal protein uS4-like (115 aa).

Belongs to the universal ribosomal protein uS4 family.

In Azoarcus sp. (strain BH72), this protein is Ribosomal protein uS4-like.